The primary structure comprises 577 residues: Arginine--tRNA ligase (577 aa).

The 'HIGH' region motif lies at 122–132 (PNVAKEMHVGH).

The protein belongs to the class-I aminoacyl-tRNA synthetase family. As to quaternary structure, monomer.

The protein resides in the cytoplasm. The catalysed reaction is tRNA(Arg) + L-arginine + ATP = L-arginyl-tRNA(Arg) + AMP + diphosphate. This is Arginine--tRNA ligase from Aliivibrio fischeri (strain ATCC 700601 / ES114) (Vibrio fischeri).